Consider the following 545-residue polypeptide: Sulfite oxidase, mitochondrial (545 aa).

The N-terminal 79 residues, 1-79 (MLLLHRAVVL…YQDHRCRAAQ (79 aa)), are a transit peptide targeting the mitochondrion. The Cytochrome b5 heme-binding domain maps to 82–161 (TRIYTKEEVS…LAQYKVGELN (80 aa)). His-118 is a heme b binding site. Ser-123 is modified (phosphoserine). Residues His-143, Gln-145, and His-147 each coordinate heme b. Positions 165-174 (KVAPTVETSD) are hinge. Residues 175-401 (PYADDPVRHP…YSHWQRRDYK (227 aa)) form a moco domain region. Mo-molybdopterin-binding positions include 215-219 (FTRNH), Cys-264, Asp-322, His-361, Arg-366, and 377-379 (HVK). Residues 402–538 (GFSPSVDWDT…RGVLSNAWHR (137 aa)) form a homodimerization region.

In terms of assembly, homodimer. Heme b is required as a cofactor. The cofactor is Mo-molybdopterin.

It localises to the mitochondrion intermembrane space. The enzyme catalyses sulfite + O2 + H2O = sulfate + H2O2. Its pathway is energy metabolism; sulfur metabolism. In terms of biological role, catalyzes the oxidation of sulfite to sulfate, the terminal reaction in the oxidative degradation of sulfur-containing amino acids. This chain is Sulfite oxidase, mitochondrial (SUOX), found in Macaca fascicularis (Crab-eating macaque).